The sequence spans 149 residues: Transcriptional repressor NrdR (149 aa).

A zinc finger spans residues 3-34 (CPFCGNRDTNVRDSRSVNEGTFIKRRRFCGEC). The ATP-cone domain maps to 49–139 (IKVIKKNGSC…VYMNFENEKD (91 aa)).

It belongs to the NrdR family. It depends on Zn(2+) as a cofactor.

Its function is as follows. Negatively regulates transcription of bacterial ribonucleotide reductase nrd genes and operons by binding to NrdR-boxes. The chain is Transcriptional repressor NrdR from Neorickettsia sennetsu (strain ATCC VR-367 / Miyayama) (Ehrlichia sennetsu).